The sequence spans 334 residues: Probable type II restriction enzyme HindVP (334 aa).

The enzyme catalyses Endonucleolytic cleavage of DNA to give specific double-stranded fragments with terminal 5'-phosphates.. In terms of biological role, a P subtype restriction enzyme that recognizes the double-stranded sequence 5'-GRCGYC-3'; the cleavage site is unknown. In Haemophilus influenzae (strain ATCC 51907 / DSM 11121 / KW20 / Rd), this protein is Probable type II restriction enzyme HindVP (hindVRP).